Reading from the N-terminus, the 173-residue chain is 2-C-methyl-D-erythritol 2,4-cyclodiphosphate synthase (173 aa).

D17 and H19 together coordinate a divalent metal cation. 4-CDP-2-C-methyl-D-erythritol 2-phosphate is bound by residues 17-19 (DVH) and 49-50 (HS). H57 contributes to the a divalent metal cation binding site. 4-CDP-2-C-methyl-D-erythritol 2-phosphate-binding positions include 76-80 (FPNTD), 147-150 (TTTE), and R157.

It belongs to the IspF family. As to quaternary structure, homotrimer. A divalent metal cation serves as cofactor.

It catalyses the reaction 4-CDP-2-C-methyl-D-erythritol 2-phosphate = 2-C-methyl-D-erythritol 2,4-cyclic diphosphate + CMP. Its pathway is isoprenoid biosynthesis; isopentenyl diphosphate biosynthesis via DXP pathway; isopentenyl diphosphate from 1-deoxy-D-xylulose 5-phosphate: step 4/6. In terms of biological role, involved in the biosynthesis of isopentenyl diphosphate (IPP) and dimethylallyl diphosphate (DMAPP), two major building blocks of isoprenoid compounds. Catalyzes the conversion of 4-diphosphocytidyl-2-C-methyl-D-erythritol 2-phosphate (CDP-ME2P) to 2-C-methyl-D-erythritol 2,4-cyclodiphosphate (ME-CPP) with a corresponding release of cytidine 5-monophosphate (CMP). This chain is 2-C-methyl-D-erythritol 2,4-cyclodiphosphate synthase, found in Ehrlichia ruminantium (strain Gardel).